A 290-amino-acid chain; its full sequence is MTIRKVLNKYWGWTFLIVPLILQVVFFYFPMFQGAFYSFTNWTGLTYNFDFVGINNYKILMTDGKFMKAIGFTLVLTLALIVGEIVLGIIIARALNAKIKGKTFFRAWFFFPAVLSGLTVSLIFKQVFNYGLPAVGSALGIKFLETSMLGTANGAVIASIFVLLWQGVAMPIILFLSGLQSIPSEIVEAAAIDGADSKQTFWSVELPYLLPSISMVFIMALKAGLTAFDQIFALTGGGPNNSTTSLGLLVYNYAFKSNQYGYANAIALILFIIIGIVSVLQIKLSKKFEV.

Transmembrane regions (helical) follow at residues 12–32, 72–92, 104–124, 156–176, 201–221, 231–253, and 260–280; these read GWTF…FPMF, FTLV…IIIA, FFRA…SLIF, VIAS…ILFL, FWSV…IMAL, IFAL…VYNY, and YGYA…VSVL. The ABC transmembrane type-1 domain maps to 70 to 281; that stretch reads IGFTLVLTLA…IIIGIVSVLQ (212 aa).

The protein belongs to the binding-protein-dependent transport system permease family. MalFG subfamily.

The protein resides in the cell membrane. Its function is as follows. Involved in a binding protein-dependent transport system responsible for the uptake of melibiose, raffinose and isomaltotriose. The protein is Multiple sugar-binding transport system permease protein MsmF (msmF) of Streptococcus mutans serotype c (strain ATCC 700610 / UA159).